Reading from the N-terminus, the 346-residue chain is Protein RecA (346 aa).

Position 67 to 74 (67 to 74) interacts with ATP; the sequence is GPESSGKT.

It belongs to the RecA family.

The protein resides in the cytoplasm. Functionally, can catalyze the hydrolysis of ATP in the presence of single-stranded DNA, the ATP-dependent uptake of single-stranded DNA by duplex DNA, and the ATP-dependent hybridization of homologous single-stranded DNAs. It interacts with LexA causing its activation and leading to its autocatalytic cleavage. The protein is Protein RecA of Frankia alni (strain DSM 45986 / CECT 9034 / ACN14a).